A 119-amino-acid polypeptide reads, in one-letter code: Large ribosomal subunit protein uL18 (119 aa).

This sequence belongs to the universal ribosomal protein uL18 family. In terms of assembly, part of the 50S ribosomal subunit; part of the 5S rRNA/L5/L18/L25 subcomplex. Contacts the 5S and 23S rRNAs.

Its function is as follows. This is one of the proteins that bind and probably mediate the attachment of the 5S RNA into the large ribosomal subunit, where it forms part of the central protuberance. This Tropheryma whipplei (strain TW08/27) (Whipple's bacillus) protein is Large ribosomal subunit protein uL18.